The primary structure comprises 604 residues: Inactive all-trans-retinol 13,14-reductase (604 aa).

Positions 1–17 (MWWILLFLEWFVDWARG) are cleaved as a signal peptide.

This sequence belongs to the carotenoid/retinoid oxidoreductase family. CrtISO subfamily.

The sequence is that of Inactive all-trans-retinol 13,14-reductase (retsatl) from Danio rerio (Zebrafish).